Consider the following 150-residue polypeptide: Putative biopolymer transport protein ExbB-like 2 (150 aa).

3 helical membrane passes run V5–I25, A63–G83, and L97–I117.

It belongs to the ExbB/TolQ family.

The protein localises to the cell inner membrane. This Helicobacter pylori (strain J99 / ATCC 700824) (Campylobacter pylori J99) protein is Putative biopolymer transport protein ExbB-like 2.